The primary structure comprises 117 residues: Transcription elongation factor SPT4 (117 aa).

Residue Ala-2 is modified to N-acetylalanine. The segment at 2 to 40 (ALETVPKDLRHLRACLLCSLVKTIDQFEYDGCDNCDAYL) is interaction with SUPT5H. Residues Cys-16, Cys-19, Cys-33, and Cys-36 each contribute to the Zn(2+) site. The C4-type zinc-finger motif lies at 16–36 (CLLCSLVKTIDQFEYDGCDNC).

Belongs to the SPT4 family. As to quaternary structure, interacts with SUPT5H to form DSIF. DSIF interacts with the positive transcription elongation factor b complex (P-TEFb complex), which is composed of CDK9 and cyclin-T (CCNT1 or CCNT2). DSIF interacts with RNA polymerase II, and this interaction is reduced by phosphorylation of the C-terminal domain (CTD) of POLR2A by P-TEFb. DSIF also interacts with the NELF complex, which is composed of NELFA, NELFB, NELFD and NELFE, and this interaction occurs following prior binding of DSIF to RNA polymerase II. DSIF also interacts with PRMT1/HRMT1L2, TATSF1, RNGTT/CAP1A, PRMT5/SKB1, SUPT6H, and can interact with PIN1. Ubiquitinated by UBR5 when not assembled in the DSIF complex, leading to its degradation: UBR5 recognizes and binds a degron that is not accessible when SUPT4H1 is part of the DSIF complex.

Its subcellular location is the nucleus. Functionally, component of the DRB sensitivity-inducing factor complex (DSIF complex), which regulates mRNA processing and transcription elongation by RNA polymerase II. DSIF positively regulates mRNA capping by stimulating the mRNA guanylyltransferase activity of RNGTT/CAP1A. DSIF also acts cooperatively with the negative elongation factor complex (NELF complex) to enhance transcriptional pausing at sites proximal to the promoter. Transcriptional pausing may facilitate the assembly of an elongation competent RNA polymerase II complex. DSIF and NELF promote pausing by inhibition of the transcription elongation factor TFIIS/S-II. TFIIS/S-II binds to RNA polymerase II at transcription pause sites and stimulates the weak intrinsic nuclease activity of the enzyme. Cleavage of blocked transcripts by RNA polymerase II promotes the resumption of transcription from the new 3' terminus and may allow repeated attempts at transcription through natural pause sites. This chain is Transcription elongation factor SPT4 (SUPT4H1), found in Pongo abelii (Sumatran orangutan).